Here is a 407-residue protein sequence, read N- to C-terminus: uncharacterized protein (407 aa).

An N-terminal signal peptide occupies residues 1 to 27 (MRILAMTRAHNAGRTLAATLDSLAVFS).

This is an uncharacterized protein from Mycobacterium bovis (strain ATCC BAA-935 / AF2122/97).